Consider the following 680-residue polypeptide: DNA-directed RNA polymerase subunit beta' (680 aa).

Residues Cys69, Cys71, Cys87, and Cys90 each contribute to the Zn(2+) site. Asp489, Asp491, and Asp493 together coordinate Mg(2+).

This sequence belongs to the RNA polymerase beta' chain family. RpoC1 subfamily. As to quaternary structure, in plastids the minimal PEP RNA polymerase catalytic core is composed of four subunits: alpha, beta, beta', and beta''. When a (nuclear-encoded) sigma factor is associated with the core the holoenzyme is formed, which can initiate transcription. The cofactor is Mg(2+). Zn(2+) is required as a cofactor.

The protein resides in the plastid. Its subcellular location is the chloroplast. It carries out the reaction RNA(n) + a ribonucleoside 5'-triphosphate = RNA(n+1) + diphosphate. DNA-dependent RNA polymerase catalyzes the transcription of DNA into RNA using the four ribonucleoside triphosphates as substrates. The sequence is that of DNA-directed RNA polymerase subunit beta' from Olimarabidopsis pumila (Dwarf rocket).